Here is a 116-residue protein sequence, read N- to C-terminus: uncharacterized protein (116 aa).

This sequence belongs to the BolA/IbaG family.

The protein localises to the mitochondrion. This is an uncharacterized protein from Schizosaccharomyces pombe (strain 972 / ATCC 24843) (Fission yeast).